Reading from the N-terminus, the 452-residue chain is Mitochondrial import inner membrane translocase subunit TIM44 (452 aa).

T128 carries the phosphothreonine modification. Position 166-173 (S166–T173) interacts with ATP. K177 is subject to N6-succinyllysine. Residue S180 is modified to Phosphoserine. N6-succinyllysine is present on K217.

Belongs to the Tim44 family. Probable component of the PAM complex at least composed of a mitochondrial HSP70 protein, GRPEL1 or GRPEL2, TIMM44, TIMM16/PAM16 and TIMM14/DNAJC19. The complex interacts with the TIMM23 component of the TIM23 complex. Interacts with SLC25A4/ANT1 and SLC25A5/ANT2; leading to inhibit the presequence translocase TIMM23, thereby promoting stabilization of PINK1.

The protein localises to the mitochondrion inner membrane. Its function is as follows. Essential component of the PAM complex, a complex required for the translocation of transit peptide-containing proteins from the inner membrane into the mitochondrial matrix in an ATP-dependent manner. Recruits mitochondrial HSP70 to drive protein translocation into the matrix using ATP as an energy source. This Mus musculus (Mouse) protein is Mitochondrial import inner membrane translocase subunit TIM44 (Timm44).